Reading from the N-terminus, the 444-residue chain is COP9 signalosome complex subunit 2 (444 aa).

The segment at 1–31 (MSDNDDDFMCDDDEDYGLEYSEDSNSEPDVD) is disordered. The PCI domain occupies 255 to 417 (AHTDFFEAFK…QVLQLDKINS (163 aa)).

Belongs to the CSN2 family. As to quaternary structure, component of the CSN complex, probably composed of CSN1b, alien/CSN2, CSN3, CSN4, CSN5, CSN6, CSN7 and CSN8. Interacts with Rpn6. As to expression, expressed during embryonic stages 11-14 in the muscle attachment sites (apodemes); pharynx attachment to the roof of the mouth and in the epidermis of the head for the dorsal and ventral prothoracic pharyngeal muscle attachment. From stage 16 onwards expression is seen in all thoracic and abdominal apodemes.

It localises to the cytoplasm. Its subcellular location is the nucleus. Functionally, component of the COP9 signalosome complex (CSN), a complex involved in various cellular and developmental processes. The CSN complex is an essential regulator of the ubiquitin (Ubl) conjugation pathway by mediating the deneddylation of the cullin subunits of the SCF-type E3 ligase complexes, leading to decrease the Ubl ligase activity of SCF. The CSN complex plays an essential role in oogenesis and embryogenesis and is required for proper photoreceptor R cell differentiation and promote lamina glial cell migration or axon targeting. It also promotes Ubl-dependent degradation of cyclin E (CycE) during early oogenesis. The chain is COP9 signalosome complex subunit 2 from Drosophila melanogaster (Fruit fly).